A 912-amino-acid polypeptide reads, in one-letter code: Intercellular adhesion molecule 5 (912 aa).

The signal sequence occupies residues 1–29 (MPGPSPGLRALLGFWVALGLGILRLSAVA). Topologically, residues 30–826 (QEPFWADLQP…RITVRVAGPW (797 aa)) are extracellular. Ig-like C2-type domains lie at 47-127 (GGSL…PLPP), 132-232 (GENF…RLLA), 239-324 (DSQS…LLTL), 332-395 (GKLV…NGSA), 403-481 (PRLD…VTLT), 486-561 (PALD…VAVT), 566-645 (PSFE…NPLG), 659-734 (PQMD…TVGV), and 738-819 (PVVA…RRIT). A glycan (N-linked (GlcNAc...) (high mannose) asparagine) is linked at asparagine 53. 2 disulfide bridges follow: cysteine 54-cysteine 97 and cysteine 58-cysteine 101. An N-linked (GlcNAc...) asparagine glycan is attached at asparagine 134. Cysteine 139 and cysteine 195 form a disulfide bridge. Residues threonine 179 and threonine 181 each carry the phosphothreonine modification. Asparagine 192 and asparagine 211 each carry an N-linked (GlcNAc...) asparagine glycan. Cysteine 246 and cysteine 297 are joined by a disulfide. Asparagine 311, asparagine 366, and asparagine 392 each carry an N-linked (GlcNAc...) asparagine glycan. The cysteines at positions 339 and 378 are disulfide-linked. 3 disulfide bridges follow: cysteine 410-cysteine 465, cysteine 493-cysteine 546, and cysteine 573-cysteine 638. Residues asparagine 576 and asparagine 639 are each glycosylated (N-linked (GlcNAc...) asparagine). Cysteine 666 and cysteine 717 are disulfide-bonded. The interval 678–708 (AAGPACARGRPSPRVRCSREGAPRPARPRVS) is disordered. N-linked (GlcNAc...) asparagine glycans are attached at residues asparagine 756, asparagine 787, and asparagine 788. Cysteine 761 and cysteine 806 are disulfide-bonded. A helical transmembrane segment spans residues 827 to 847 (LWIAVGGAVGGAVLLAAGAGL). Residues 848–912 (AFYVQSTACK…EVFAIQLTSA (65 aa)) are Cytoplasmic-facing. The interval 880–902 (GGAGSGAEGGPEAEDSAESPAGG) is disordered.

Belongs to the immunoglobulin superfamily. ICAM family. Post-translationally, glycosylation at Asn-53 is critical for functional folding. Expressed on neurons in the most rostral segment of the mammalian brain, the telencephalon.

It is found in the membrane. ICAM proteins are ligands for the leukocyte adhesion protein LFA-1 (integrin alpha-L/beta-2). The protein is Intercellular adhesion molecule 5 (ICAM5) of Oryctolagus cuniculus (Rabbit).